Reading from the N-terminus, the 124-residue chain is Protein MGF 100-1R (124 aa).

Belongs to the asfivirus MGF 100 family.

Functionally, plays a role in virus cell tropism, and may be required for efficient virus replication in macrophages. This Ornithodoros (relapsing fever ticks) protein is Protein MGF 100-1R.